Consider the following 371-residue polypeptide: MSKVCRDLRIYLRLLHIMGMMCWHFDSDHCQLVATSGSERYAVVYAGCILVSTTAGFIFALLHPSRFHIAIYNQTGNFYEAVIFRSTCVVLFLVYVILYAWRHRYRDLVQHILRLNRRCASSCTNQQFLHNIILYGMLTILCFGNYLHGYTRAGLATLPLALCMLVYIFAFLVLCLLLMFFVSLKQVMTAGLIHYNQQLCQGDLISGLRGRQQILKLCGGELNECFGLLMLPIVALVLLMAPSGPFFLISTVLEGKFRPDECLIMLLTSSTWDTPWMIMLVLMLRTNGISEEANKTAKMLTKVPRTGTGLDRMIEKFLLKNLRQKPILTAYGFFALDKSTLFKLFTAIFTYMVILVQFKEMENSTKSINKF.

At 1 to 41 (MSKVCRDLRIYLRLLHIMGMMCWHFDSDHCQLVATSGSERY) the chain is on the cytoplasmic side. Residues 42–62 (AVVYAGCILVSTTAGFIFALL) form a helical membrane-spanning segment. Residues 63–80 (HPSRFHIAIYNQTGNFYE) are Extracellular-facing. N-linked (GlcNAc...) asparagine glycosylation occurs at N73. Residues 81–101 (AVIFRSTCVVLFLVYVILYAW) traverse the membrane as a helical segment. Topologically, residues 102–127 (RHRYRDLVQHILRLNRRCASSCTNQQ) are cytoplasmic. A helical membrane pass occupies residues 128 to 148 (FLHNIILYGMLTILCFGNYLH). Over 149-161 (GYTRAGLATLPLA) the chain is Extracellular. A helical membrane pass occupies residues 162-182 (LCMLVYIFAFLVLCLLLMFFV). Residues 183–228 (SLKQVMTAGLIHYNQQLCQGDLISGLRGRQQILKLCGGELNECFGL) lie on the Cytoplasmic side of the membrane. Residues 229-249 (LMLPIVALVLLMAPSGPFFLI) form a helical membrane-spanning segment. Residues 250-263 (STVLEGKFRPDECL) lie on the Extracellular side of the membrane. Residues 264–284 (IMLLTSSTWDTPWMIMLVLML) traverse the membrane as a helical segment. The Cytoplasmic portion of the chain corresponds to 285-340 (RTNGISEEANKTAKMLTKVPRTGTGLDRMIEKFLLKNLRQKPILTAYGFFALDKST). A helical membrane pass occupies residues 341–361 (LFKLFTAIFTYMVILVQFKEM). Residues 362 to 371 (ENSTKSINKF) are Extracellular-facing. N363 carries N-linked (GlcNAc...) asparagine glycosylation.

The protein belongs to the insect chemoreceptor superfamily. Gustatory receptor (GR) family. Gr21a subfamily. As to expression, expressed in the adult labellar chemosensory neurons, and adult thorax and wing. In larvae, is expressed in neurons of the posterior pharyngeal sense organ.

The protein resides in the cell membrane. Gustatory receptor which mediates acceptance or avoidance behavior, depending on its substrates. Plays a role in sustaining courtship behavior in males, possibly through the reception of a stimulating arrestant pheromone. This Drosophila melanogaster (Fruit fly) protein is Gustatory and pheromone receptor 39a, isoform A (Gr39a).